The following is a 123-amino-acid chain: uncharacterized protein (123 aa).

Helical transmembrane passes span 7-29 (VKHLIIAGFSAAILSFLISFDAV), 44-66 (FFIHSFLLIGLPLALFTDAVHRI), and 79-101 (LGLYATVVYVSWDSAVWLAAAMA).

It localises to the cell membrane. This is an uncharacterized protein from Bacillus subtilis (strain 168).